The sequence spans 4579 residues: Sacsin (4579 aa).

Residues 9–84 form the Ubiquitin-like domain; that stretch reads VPVTVLPGCV…FVNLQSKGLK (76 aa). K943 carries the post-translational modification N6-acetyllysine. A phosphoserine mark is found at S1779 and S2511. At T2516 the chain carries Phosphothreonine. Residue S3435 is modified to Phosphoserine. Disordered regions lie at residues 4248 to 4273 and 4279 to 4298; these read PEESSQSRDSAPSTPTSPTEFLTPGL and LFSGRESHKTSSKHQSPKKL. A compositionally biased stretch (polar residues) spans 4254 to 4267; that stretch reads SRDSAPSTPTSPTE. T4261 carries the post-translational modification Phosphothreonine. The residue at position 4264 (S4264) is a Phosphoserine. Basic residues predominate over residues 4288–4298; it reads TSSKHQSPKKL. Positions 4306–4393 constitute a J domain; sequence ILKEVTSVVE…ASRFQSDKYS (88 aa). Positions 4405-4427 are disordered; that stretch reads ATSHKSERQQQNKEKCPPSAGQT. Positions 4406 to 4420 are enriched in basic and acidic residues; it reads TSHKSERQQQNKEKC. The 117-residue stretch at 4451 to 4567 folds into the HEPN domain; the sequence is LRQARANFSA…MRVMECTACI (117 aa).

Highly expressed in the central nervous system. Also found in skeletal muscle and at low levels in pancreas.

The protein localises to the cytoplasm. Its function is as follows. Co-chaperone which acts as a regulator of the Hsp70 chaperone machinery and may be involved in the processing of other ataxia-linked proteins. This is Sacsin (SACS) from Homo sapiens (Human).